Here is a 58-residue protein sequence, read N- to C-terminus: Ranakinin-N (58 aa).

Positions 1–22 are cleaved as a signal peptide; it reads MFTMKKSLLLLFFLGTISMSLC. Residues 23–43 constitute a propeptide that is removed on maturation; that stretch reads EEKRDADEEETEGEAKMEDIK. The segment at 25-58 is disordered; sequence KRDADEEETEGEAKMEDIKRAEAVPPGFTPFRKP. Residues 35-46 show a composition bias toward basic and acidic residues; that stretch reads GEAKMEDIKRAE.

As to expression, expressed by the skin glands.

The protein localises to the secreted. In terms of biological role, induces contraction of intestinal smooth muscle in isolated guinea pig ileum. May induce relaxation of arterial smooth muscle. May target bradykinin receptors (BDKRB). Lacks antibacterial activity against the Gram-positive bacterium S.aureus and the Gram-negative bacteria E.coli and B.dysenteria, and antifungal activity against C.albicans. The protein is Ranakinin-N of Hylarana nigrovittata (Black-striped frog).